A 720-amino-acid polypeptide reads, in one-letter code: Iron-sulfur clusters transporter ATM1, mitochondrial (720 aa).

The N-terminal 36 residues, 1–36, are a transit peptide targeting the mitochondrion; that stretch reads MIMFRSLSVTPVWKAGLSLSHRSIPINSRLSSVRNY. Topologically, residues 37–129 are mitochondrial matrix; it reads ISIGCANKTG…PSGDNKVKIR (93 aa). The span at 64-77 shows a compositional bias: polar residues; that stretch reads RFNSSSNGNGTDKN. The interval 64–102 is disordered; the sequence is RFNSSSNGNGTDKNASVAPKTEVKKIVPPKPSTNGKSKT. Residues 130 to 151 traverse the membrane as a helical segment; that stretch reads VLIALALLIGAKLLNVQVPFFF. One can recognise an ABC transmembrane type-1 domain in the interval 130 to 421; that stretch reads VLIALALLIG…LGSVYRELKQ (292 aa). Over 152-175 the chain is Mitochondrial intermembrane; the sequence is KQTIDSMNIEWGPDVATVLPVAIT. The helical transmembrane segment at 176–199 threads the bilayer; sequence MTILSYGAARFGAVMFGELRNAVF. Over 200–248 the chain is Mitochondrial matrix; the sequence is AKVAQNAIRKVSLQTFQHLMKLDLGWHLSRQTGGLTRAMDRGTKGISYV. A helical membrane pass occupies residues 249–272; sequence LSAMVFHMIPITFEISVVCGILTY. Residue Gln-273 is a topological domain, mitochondrial intermembrane. A helical membrane pass occupies residues 274 to 294; that stretch reads FGSSFAAMTFVTMLLYSFFTF. Over 295–360 the chain is Mitochondrial matrix; sequence KTTAWRTEFR…SQIKVAQSLA (66 aa). Glutathione is bound by residues 300-304 and 363-366; these read RTEFR and NAGQ. A helical transmembrane segment spans residues 361–379; it reads FLNAGQNFIFTSALTAMMY. The Mitochondrial intermembrane portion of the chain corresponds to 380-394; sequence MGASGVMEGALTVGD. Residues 395-416 form a helical membrane-spanning segment; that stretch reads LVLINQLVFQLSVPLNFLGSVY. Residue Gly-413 participates in glutathione binding. Residues 417–720 are Mitochondrial matrix-facing; sequence RELKQSLIDM…EKEPRTSKKD (304 aa). Residues 456-692 form the ABC transporter domain; the sequence is IKFENVTFGY…PNSLYSELWN (237 aa). ATP-binding positions include Tyr-465 and 489–500; that span reads GPSGSGKSTILR.

Belongs to the ABC transporter superfamily. ABCB family. Heavy Metal importer (TC 3.A.1.210) subfamily. As to quaternary structure, homodimer.

It localises to the mitochondrion inner membrane. Its function is as follows. Performs an essential function in the generation of cytoplasmic iron-sulfur proteins by mediating the ATP-dependent export of Fe/S cluster precursors synthesized by NFS1 and other mitochondrial proteins. Hydrolyzes ATP. Binds glutathione and may function by transporting a glutathione-conjugated iron-sulfur compound. The sequence is that of Iron-sulfur clusters transporter ATM1, mitochondrial from Kluyveromyces lactis (strain ATCC 8585 / CBS 2359 / DSM 70799 / NBRC 1267 / NRRL Y-1140 / WM37) (Yeast).